A 443-amino-acid chain; its full sequence is Squalene synthase (443 aa).

The next 2 membrane-spanning stretches (helical) occupy residues 291-311 (TSFNFCAIPQVMAIATLELVF) and 423-443 (ILLLSLGVAVFGVVYGVVRII).

This sequence belongs to the phytoene/squalene synthase family. The cofactor is Mg(2+).

Its subcellular location is the endoplasmic reticulum membrane. The catalysed reaction is 2 (2E,6E)-farnesyl diphosphate + NADPH + H(+) = squalene + 2 diphosphate + NADP(+). It carries out the reaction 2 (2E,6E)-farnesyl diphosphate + NADH + H(+) = squalene + 2 diphosphate + NAD(+). The protein operates within terpene metabolism; lanosterol biosynthesis; lanosterol from farnesyl diphosphate: step 1/3. Functionally, catalyzes the condensation of 2 two farnesyl pyrophosphate moieties to form squalene. It is the first committed enzyme of the sterol biosynthesis pathway. Required for the biosynthesis of ergosterol. This is Squalene synthase (ERG9) from Cyberlindnera jadinii (Torula yeast).